The primary structure comprises 449 residues: Chromosomal replication initiator protein DnaA (449 aa).

Residues Met-1 to Ile-71 form a domain I, interacts with DnaA modulators region. Positions Ile-71–Ser-112 are domain II. The segment at Arg-113–Ser-329 is domain III, AAA+ region. 4 residues coordinate ATP: Gly-157, Gly-159, Lys-160, and Thr-161. The tract at residues Arg-330–Thr-449 is domain IV, binds dsDNA.

The protein belongs to the DnaA family. In terms of assembly, oligomerizes as a right-handed, spiral filament on DNA at oriC.

Its subcellular location is the cytoplasm. Its function is as follows. Plays an essential role in the initiation and regulation of chromosomal replication. ATP-DnaA binds to the origin of replication (oriC) to initiate formation of the DNA replication initiation complex once per cell cycle. Binds the DnaA box (a 9 base pair repeat at the origin) and separates the double-stranded (ds)DNA. Forms a right-handed helical filament on oriC DNA; dsDNA binds to the exterior of the filament while single-stranded (ss)DNA is stabiized in the filament's interior. The ATP-DnaA-oriC complex binds and stabilizes one strand of the AT-rich DNA unwinding element (DUE), permitting loading of DNA polymerase. After initiation quickly degrades to an ADP-DnaA complex that is not apt for DNA replication. Binds acidic phospholipids. This is Chromosomal replication initiator protein DnaA from Nitrosococcus oceani (strain ATCC 19707 / BCRC 17464 / JCM 30415 / NCIMB 11848 / C-107).